Here is a 145-residue protein sequence, read N- to C-terminus: Cystin-1 (145 aa).

The interval 1-129 (MGSGSSRSGR…PEGQSAISYD (129 aa)) is disordered. Gly-2 carries N-myristoyl glycine lipidation. The Ciliary targeting motif motif lies at 29 to 33 (ASEGG). Residue Ser-116 is modified to Phosphoserine.

In terms of assembly, interacts (when myristoylated) with UNC119 and UNC119B; interaction is required for localization to cilium. Expressed primarily in the kidney and liver. Expressed at lower levels in the lung, brain and heart.

It localises to the cell projection. The protein resides in the cilium membrane. The protein localises to the cytoplasm. Its subcellular location is the cytoskeleton. It is found in the cilium axoneme. The protein is Cystin-1 (Cys1) of Mus musculus (Mouse).